A 174-amino-acid chain; its full sequence is Elongation factor Tu, mitochondrial (174 aa).

GTP is bound at residue 62 to 66 (DCPGH). Residue Lys78 is modified to N6-succinyllysine. Thr103 carries the phosphothreonine modification. Ser121 carries the post-translational modification Phosphoserine. An N6-acetyllysine modification is found at Lys161.

The protein belongs to the GTP-binding elongation factor family. EF-Tu/EF-1A subfamily.

It localises to the mitochondrion. The enzyme catalyses GTP + H2O = GDP + phosphate + H(+). GTP hydrolase that promotes the GTP-dependent binding of aminoacyl-tRNA to the A-site of ribosomes during protein biosynthesis. In Mesocricetus auratus (Golden hamster), this protein is Elongation factor Tu, mitochondrial.